Reading from the N-terminus, the 317-residue chain is Apolipoprotein E (317 aa).

The N-terminal stretch at 1–18 (MKVLWAALLVTFLAGCQA) is a signal peptide. 8 tandem repeats follow at residues 80–101 (ALMDETMKELKAYKSELEEQLT), 102–123 (PVAEETRARLSKELQAAQARLG), 124–145 (ADMEDVRGRLVQYRGEVQAMLG), 146–167 (QSTEELRARLASHLRKLRKRLL), 168–189 (RDADDLQKRLAVYQAGAREGAE), 190–211 (RGVSAIRERLGPLVEQGRVRAA), 212–233 (TVGSVAGKPLQERAQAWGERLR), and 234–255 (ARMEEMGSRTRDRLDEVKEQVA). The segment at 80-255 (ALMDETMKEL…RLDEVKEQVA (176 aa)) is 8 X 22 AA approximate tandem repeats. Position 143 is a methionine sulfoxide (M143). S147 bears the Phosphoserine mark. The segment at 158–168 (HLRKLRKRLLR) is LDL and other lipoprotein receptors binding. A heparin-binding site is contributed by 162–165 (LRKR). The interval 210–290 (AATVGSVAGK…SWFEPLVEDM (81 aa)) is lipid-binding and lipoprotein association. 229–236 (GERLRARM) contacts heparin. Residues 266–317 (QQIRLQAEAFQARLKSWFEPLVEDMQRQWAGLVEKVQAAVGTSAAPVPSDNH) are homooligomerization. Positions 278 to 290 (RLKSWFEPLVEDM) are specificity for association with VLDL.

The protein belongs to the apolipoprotein A1/A4/E family. As to quaternary structure, homotetramer. May interact with ABCA1; functionally associated with ABCA1 in the biogenesis of HDLs. May interact with APP/A4 amyloid-beta peptide; the interaction is extremely stable in vitro but its physiological significance is unclear. May interact with MAPT. May interact with MAP2. In the cerebrospinal fluid, interacts with secreted SORL1. Interacts with PMEL; this allows the loading of PMEL luminal fragment on ILVs to induce fibril nucleation. APOE exists as multiple glycosylated and sialylated glycoforms within cells and in plasma. The extent of glycosylation and sialylation are tissue and context specific. In terms of processing, glycated in plasma VLDL. Post-translationally, phosphorylated by FAM20C in the extracellular medium.

The protein localises to the secreted. The protein resides in the extracellular space. It is found in the extracellular matrix. It localises to the extracellular vesicle. Its subcellular location is the endosome. The protein localises to the multivesicular body. Functionally, APOE is an apolipoprotein, a protein associating with lipid particles, that mainly functions in lipoprotein-mediated lipid transport between organs via the plasma and interstitial fluids. APOE is a core component of plasma lipoproteins and is involved in their production, conversion and clearance. Apolipoproteins are amphipathic molecules that interact both with lipids of the lipoprotein particle core and the aqueous environment of the plasma. As such, APOE associates with chylomicrons, chylomicron remnants, very low density lipoproteins (VLDL) and intermediate density lipoproteins (IDL) but shows a preferential binding to high-density lipoproteins (HDL). It also binds a wide range of cellular receptors including the LDL receptor/LDLR, the LDL receptor-related proteins LRP1, LRP2 and LRP8 and the very low-density lipoprotein receptor/VLDLR that mediate the cellular uptake of the APOE-containing lipoprotein particles. Finally, APOE also has a heparin-binding activity and binds heparan-sulfate proteoglycans on the surface of cells, a property that supports the capture and the receptor-mediated uptake of APOE-containing lipoproteins by cells. A main function of APOE is to mediate lipoprotein clearance through the uptake of chylomicrons, VLDLs, and HDLs by hepatocytes. APOE is also involved in the biosynthesis by the liver of VLDLs as well as their uptake by peripheral tissues ensuring the delivery of triglycerides and energy storage in muscle, heart and adipose tissues. By participating in the lipoprotein-mediated distribution of lipids among tissues, APOE plays a critical role in plasma and tissues lipid homeostasis. APOE is also involved in two steps of reverse cholesterol transport, the HDLs-mediated transport of cholesterol from peripheral tissues to the liver, and thereby plays an important role in cholesterol homeostasis. First, it is functionally associated with ABCA1 in the biogenesis of HDLs in tissues. Second, it is enriched in circulating HDLs and mediates their uptake by hepatocytes. APOE also plays an important role in lipid transport in the central nervous system, regulating neuron survival and sprouting. This Pongo pygmaeus (Bornean orangutan) protein is Apolipoprotein E (APOE).